Consider the following 332-residue polypeptide: CMRF35-like molecule 9 (332 aa).

The N-terminal stretch at 1–18 is a signal peptide; that stretch reads MRLLVLLWGCLLLPGYEA. Residues 19–121 enclose the Ig-like V-type domain; that stretch reads LEGPEEISGF…RGPDESLLIS (103 aa). Residues 19 to 247 lie on the Extracellular side of the membrane; sequence LEGPEEISGF…KPRVSIPMVR (229 aa). Residues cysteine 37 and cysteine 107 are joined by a disulfide bond. Asparagine 96 is a glycosylation site (N-linked (GlcNAc...) asparagine). Threonine 137, threonine 143, threonine 144, threonine 155, threonine 161, threonine 170, threonine 171, threonine 177, threonine 187, and threonine 195 each carry an O-linked (GalNAc...) threonine glycan. A disordered region spans residues 146-239; sequence LQPKAKAQQT…PALSSGSSKP (94 aa). The segment covering 147 to 158 has biased composition (low complexity); sequence QPKAKAQQTQPP. A compositionally biased stretch (low complexity) spans 168-181; it reads AATTAKQGKTGAEA. The segment covering 186-205 has biased composition (polar residues); it reads GTSQYGHERTSQYTGTSPHP. O-linked (GalNAc...) serine glycosylation occurs at serine 196. O-linked (GalNAc...) threonine glycans are attached at residues threonine 199 and threonine 201. Serine 202 carries an O-linked (GalNAc...) serine glycan. Threonine 207 carries an O-linked (GalNAc...) threonine glycan. Serine 208, serine 213, serine 214, and serine 222 each carry an O-linked (GalNAc...) serine glycan. Residues 220 to 239 are compositionally biased toward polar residues; the sequence is LDSTSAEDTSPALSSGSSKP. O-linked (GalNAc...) threonine glycosylation is present at threonine 223. The O-linked (GalNAc...) serine glycan is linked to serine 224. O-linked (GalNAc...) threonine glycosylation is present at threonine 228. O-linked (GalNAc...) serine glycosylation is found at serine 229 and serine 237. The chain crosses the membrane as a helical span at residues 248–268; the sequence is ILAPVLVLLSLLSAAGLIAFC. The Cytoplasmic segment spans residues 269–332; the sequence is SHLLLWRKEA…ELGFSKFVSA (64 aa).

This sequence belongs to the CD300 family. O-glycosylated with sialylated oligosaccharides. Highly expressed in heart, skeletal muscle and placenta.

It localises to the apical cell membrane. The protein localises to the basolateral cell membrane. Its subcellular location is the endosome. The protein resides in the multivesicular body membrane. Its function is as follows. Receptor which may mediate L-selectin-dependent lymphocyte rollings. Binds SELL in a calcium dependent manner. Binds lymphocyte. In Homo sapiens (Human), this protein is CMRF35-like molecule 9 (CD300LG).